The primary structure comprises 107 residues: Small ribosomal subunit protein uS17 (107 aa).

It belongs to the universal ribosomal protein uS17 family. As to quaternary structure, part of the 30S ribosomal subunit.

In terms of biological role, one of the primary rRNA binding proteins, it binds specifically to the 5'-end of 16S ribosomal RNA. The sequence is that of Small ribosomal subunit protein uS17 from Aquifex aeolicus (strain VF5).